A 331-amino-acid chain; its full sequence is DNA-directed RNA polymerase subunit alpha (331 aa).

The segment at 1–237 (MQSFEKEFLK…DQLSSFIDLK (237 aa)) is alpha N-terminal domain (alpha-NTD). The alpha C-terminal domain (alpha-CTD) stretch occupies residues 251-331 (FDPSLLNLVD…NWPPKHLSEQ (81 aa)).

The protein belongs to the RNA polymerase alpha chain family. Homodimer. The RNAP catalytic core consists of 2 alpha, 1 beta, 1 beta' and 1 omega subunit. When a sigma factor is associated with the core the holoenzyme is formed, which can initiate transcription.

The enzyme catalyses RNA(n) + a ribonucleoside 5'-triphosphate = RNA(n+1) + diphosphate. Its function is as follows. DNA-dependent RNA polymerase catalyzes the transcription of DNA into RNA using the four ribonucleoside triphosphates as substrates. The protein is DNA-directed RNA polymerase subunit alpha of Blochmanniella floridana.